The primary structure comprises 291 residues: Ribosomal large subunit pseudouridine synthase B (291 aa).

The S4 RNA-binding domain maps to 3–75; that stretch reads EKLQKVLARA…ICRVLAYYKP (73 aa). Asp110 acts as the Nucleophile in catalysis. The tract at residues 256 to 291 is disordered; the sequence is VEKDRRRMKANQIRRAVKRHSQVSGGRRSGGRNNNG.

It belongs to the pseudouridine synthase RsuA family.

The catalysed reaction is uridine(2605) in 23S rRNA = pseudouridine(2605) in 23S rRNA. Responsible for synthesis of pseudouridine from uracil-2605 in 23S ribosomal RNA. This is Ribosomal large subunit pseudouridine synthase B (rluB) from Escherichia coli (strain K12).